The primary structure comprises 158 residues: Endoribonuclease YbeY (158 aa).

Zn(2+) contacts are provided by histidine 119, histidine 123, and aspartate 129.

This sequence belongs to the endoribonuclease YbeY family. Zn(2+) is required as a cofactor.

It is found in the cytoplasm. Its function is as follows. Single strand-specific metallo-endoribonuclease involved in late-stage 70S ribosome quality control and in maturation of the 3' terminus of the 16S rRNA. This Chlamydia caviae (strain ATCC VR-813 / DSM 19441 / 03DC25 / GPIC) (Chlamydophila caviae) protein is Endoribonuclease YbeY.